Here is a 288-residue protein sequence, read N- to C-terminus: Polyamine aminopropyltransferase (288 aa).

One can recognise a PABS domain in the interval 9–242 (SGWLDEYHQG…GLWSWAFASM (234 aa)). Glutamine 36 provides a ligand contact to S-methyl-5'-thioadenosine. Residues histidine 67 and aspartate 91 each contribute to the spermidine site. Residues glutamate 111 and 143 to 144 (NG) contribute to the S-methyl-5'-thioadenosine site. Aspartate 162 (proton acceptor) is an active-site residue. Position 169 (proline 169) interacts with S-methyl-5'-thioadenosine.

The protein belongs to the spermidine/spermine synthase family. As to quaternary structure, homodimer or homotetramer.

The protein resides in the cytoplasm. It carries out the reaction S-adenosyl 3-(methylsulfanyl)propylamine + putrescine = S-methyl-5'-thioadenosine + spermidine + H(+). Its pathway is amine and polyamine biosynthesis; spermidine biosynthesis; spermidine from putrescine: step 1/1. Catalyzes the irreversible transfer of a propylamine group from the amino donor S-adenosylmethioninamine (decarboxy-AdoMet) to putrescine (1,4-diaminobutane) to yield spermidine. This Prochlorococcus marinus (strain NATL1A) protein is Polyamine aminopropyltransferase.